We begin with the raw amino-acid sequence, 345 residues long: D-alanine--D-alanine ligase (345 aa).

The ATP-grasp domain maps to Lys-137–Glu-342. Glu-169 to Glu-224 serves as a coordination point for ATP. Mg(2+) is bound by residues Asp-295, Glu-309, and Asn-311.

It belongs to the D-alanine--D-alanine ligase family. Mg(2+) is required as a cofactor. The cofactor is Mn(2+).

It is found in the cytoplasm. The catalysed reaction is 2 D-alanine + ATP = D-alanyl-D-alanine + ADP + phosphate + H(+). It functions in the pathway cell wall biogenesis; peptidoglycan biosynthesis. In terms of biological role, cell wall formation. This Synechococcus sp. (strain RCC307) protein is D-alanine--D-alanine ligase.